The following is a 462-amino-acid chain: Indoleacetamide hydrolase (462 aa).

Active-site charge relay system residues include Lys-74 and Ser-149. Ser-173 serves as the catalytic Acyl-ester intermediate.

Belongs to the amidase family.

Its pathway is plant hormone metabolism; auxin biosynthesis. Functionally, hydrolyzes indole-3-acetamide (IAM) into indole-3-acetic acid (IAA). The sequence is that of Indoleacetamide hydrolase (iaaH) from Allorhizobium ampelinum (strain ATCC BAA-846 / DSM 112012 / S4) (Agrobacterium vitis (strain S4)).